Consider the following 662-residue polypeptide: UvrABC system protein B (662 aa).

The 158-residue stretch at D31 to R188 folds into the Helicase ATP-binding domain. G44–T51 is a binding site for ATP. The Beta-hairpin motif lies at Y97 to V120. The Helicase C-terminal domain maps to Q435–I601. A UVR domain is found at K626–M661.

Belongs to the UvrB family. In terms of assembly, forms a heterotetramer with UvrA during the search for lesions. Interacts with UvrC in an incision complex.

The protein localises to the cytoplasm. Functionally, the UvrABC repair system catalyzes the recognition and processing of DNA lesions. A damage recognition complex composed of 2 UvrA and 2 UvrB subunits scans DNA for abnormalities. Upon binding of the UvrA(2)B(2) complex to a putative damaged site, the DNA wraps around one UvrB monomer. DNA wrap is dependent on ATP binding by UvrB and probably causes local melting of the DNA helix, facilitating insertion of UvrB beta-hairpin between the DNA strands. Then UvrB probes one DNA strand for the presence of a lesion. If a lesion is found the UvrA subunits dissociate and the UvrB-DNA preincision complex is formed. This complex is subsequently bound by UvrC and the second UvrB is released. If no lesion is found, the DNA wraps around the other UvrB subunit that will check the other stand for damage. This Streptococcus gordonii (strain Challis / ATCC 35105 / BCRC 15272 / CH1 / DL1 / V288) protein is UvrABC system protein B.